A 100-amino-acid polypeptide reads, in one-letter code: Urease subunit gamma (100 aa).

This sequence belongs to the urease gamma subunit family. As to quaternary structure, heterotrimer of UreA (gamma), UreB (beta) and UreC (alpha) subunits. Three heterotrimers associate to form the active enzyme.

Its subcellular location is the cytoplasm. The enzyme catalyses urea + 2 H2O + H(+) = hydrogencarbonate + 2 NH4(+). Its pathway is nitrogen metabolism; urea degradation; CO(2) and NH(3) from urea (urease route): step 1/1. This Dinoroseobacter shibae (strain DSM 16493 / NCIMB 14021 / DFL 12) protein is Urease subunit gamma.